The sequence spans 155 residues: NADH-ubiquinone oxidoreductase chain 6 (155 aa).

A run of 4 helical transmembrane segments spans residues 24–44 (MSLL…LGSF), 51–71 (YILF…VCMI), 88–108 (AWGA…IILG), and 118–138 (IPMT…FAVV).

The protein belongs to the complex I subunit 6 family.

The protein localises to the mitochondrion membrane. The catalysed reaction is a ubiquinone + NADH + 5 H(+)(in) = a ubiquinol + NAD(+) + 4 H(+)(out). In terms of biological role, core subunit of the mitochondrial membrane respiratory chain NADH dehydrogenase (Complex I) that is believed to belong to the minimal assembly required for catalysis. Complex I functions in the transfer of electrons from NADH to the respiratory chain. The immediate electron acceptor for the enzyme is believed to be ubiquinone. In Albinaria caerulea (Land snail), this protein is NADH-ubiquinone oxidoreductase chain 6 (ND6).